An 880-amino-acid polypeptide reads, in one-letter code: Alanine--tRNA ligase (880 aa).

4 residues coordinate Zn(2+): His-566, His-570, Cys-668, and His-672.

It belongs to the class-II aminoacyl-tRNA synthetase family. Zn(2+) is required as a cofactor.

It localises to the cytoplasm. It carries out the reaction tRNA(Ala) + L-alanine + ATP = L-alanyl-tRNA(Ala) + AMP + diphosphate. Its function is as follows. Catalyzes the attachment of alanine to tRNA(Ala) in a two-step reaction: alanine is first activated by ATP to form Ala-AMP and then transferred to the acceptor end of tRNA(Ala). Also edits incorrectly charged Ser-tRNA(Ala) and Gly-tRNA(Ala) via its editing domain. This is Alanine--tRNA ligase from Nostoc punctiforme (strain ATCC 29133 / PCC 73102).